Reading from the N-terminus, the 632-residue chain is Cyclic GMP-AMP synthase-like receptor 2 (632 aa).

Mg(2+)-binding residues include aspartate 71, aspartate 73, and aspartate 181. Aspartate 295 contacts Mn(2+).

Belongs to the mab-21 family. Mg(2+) serves as cofactor. The cofactor is Mn(2+).

Functionally, nucleotidyltransferase that catalyzes the formation of some cyclic nucleotide and plays a key role in innate immunity. Directly binds some unknown ligand, activating the nucleotidyltransferase activity, leading to synthesis of a second messenger that binds to and activates Sting, thereby triggering the immune response via activation of the NF-kappa-B transcription factor. The protein is Cyclic GMP-AMP synthase-like receptor 2 of Crassostrea virginica (Eastern oyster).